We begin with the raw amino-acid sequence, 784 residues long: Ribosome biogenesis protein BOP1 homolog (784 aa).

The span at 1-11 shows a compositional bias: basic residues; that stretch reads MTKKLALKRRG. The disordered stretch occupies residues 1 to 159; it reads MTKKLALKRR…DSDTSDEEDI (159 aa). Composition is skewed to acidic residues over residues 27-36, 45-54, 62-73, and 84-111; these read SENEEEEEDL, EDSTDDEGID, SEELQFESDEEG, and AEED…EDEE. 2 stretches are compositionally biased toward basic and acidic residues: residues 112 to 123 and 138 to 148; these read KVSKSKQSDDKP and LPKRDSSKPEY. A compositionally biased stretch (acidic residues) spans 149–158; sequence QDSDTSDEED. WD repeat units follow at residues 445–486, 488–526, 570–612, 615–653, 656–695, 699–738, and 754–784; these read GHTD…RTIE, DEVV…KVLV, THFK…SQIP, KSKG…LVKK, TNSK…KPYQ, LHRN…DLLQ, and RDEF…RLYT.

It belongs to the WD repeat BOP1/ERB1 family.

It localises to the nucleus. The protein localises to the nucleolus. It is found in the nucleoplasm. Required for maturation of ribosomal RNAs and formation of the large ribosomal subunit. This chain is Ribosome biogenesis protein BOP1 homolog, found in Drosophila sechellia (Fruit fly).